The sequence spans 175 residues: Electron transport protein HydN (175 aa).

4 consecutive 4Fe-4S ferredoxin-type domains span residues 2–32 (NRFIIADASKCIGCRTCEVACVVSHQENQDC), 48–79 (KGVNISTATVCRQCEDAPCANVCPNGAISRDK), 80–109 (GFVHVMQERCIGCKTCVVACPYGAMEVVVR), and 124–157 (DKAEANKCDLCNHREDGPACMAACPTHALICVDR). [4Fe-4S] cluster-binding residues include Cys-12, Cys-15, Cys-18, Cys-22, Cys-58, Cys-61, Cys-66, Cys-70, Cys-89, Cys-92, Cys-95, Cys-99, Cys-131, Cys-134, Cys-143, and Cys-147.

Requires [4Fe-4S] cluster as cofactor.

Its function is as follows. Electron transport from formate to hydrogen. The polypeptide is Electron transport protein HydN (hydN) (Escherichia coli O157:H7).